A 121-amino-acid chain; its full sequence is Trypsin/alpha-amylase inhibitor CMX1/CMX3 (121 aa).

Residues 1–24 (MAFKHQLILSTAILLAVLAAASAS) form the signal peptide.

Belongs to the protease inhibitor I6 (cereal trypsin/alpha-amylase inhibitor) family.

The protein resides in the secreted. The sequence is that of Trypsin/alpha-amylase inhibitor CMX1/CMX3 from Triticum aestivum (Wheat).